The following is a 346-amino-acid chain: MESLMASSTLPPLFADEDGSKESNDLATSGLTHPEGPYGSAATSTTNPEFVEDLSQGQLLQSEASNAVEGNEQRPEDEQRSKRGGWSKGRKRKKPLRDSNAPKSPLTGYVRFMNERREQLRAKRPEVPFPEITRMLGNEWSKLPPEEKQRYLDEADRDKERYMKELEQYQKTEAYKVFSRKTQDRQKGKSHRQDAARQATHDHEKETEVKERSVFDIPIFTEEFLNHSKAREAELRQLRKSNMEFEERNAALQKHVESMRTAVEKLEVDVIQERSRNTVLQQHLETLRQMLTSSFASMPLPGSGEIPTVDTIDSYMNRLHSIILANPQDNENFIATVREVVNRLDR.

2 stretches are compositionally biased toward polar residues: residues Met-1–Leu-10 and Ser-55–Ser-65. 2 disordered regions span residues Met-1–Phe-112 and Phe-178–Lys-210. Basic and acidic residues predominate over residues Asn-71 to Ser-81. Basic residues predominate over residues Lys-82–Pro-95. The segment at residues Pro-102–Gln-170 is a DNA-binding region (HMG box). Ser-104 is modified (phosphoserine). Positions Lys-181 to Lys-210 are enriched in basic and acidic residues. Residues Ser-228–Gln-272 are a coiled coil.

Interacts with DTNB. Expressed in brain. Detected in mature neurons.

Its subcellular location is the nucleus. Its function is as follows. Plays a role in neuronal differentiation as chromatin-associated protein. Acts as inhibitor of HMG20B. Overcomes the repressive effects of the neuronal silencer REST and induces the activation of neuronal-specific genes. Involved in the recruitment of the histone methyltransferase KMT2A/MLL1 and consequent increased methylation of histone H3 lysine 4. In Mus musculus (Mouse), this protein is High mobility group protein 20A (Hmg20a).